Here is a 375-residue protein sequence, read N- to C-terminus: Anhydro-N-acetylmuramic acid kinase (375 aa).

Position 13 to 20 (13 to 20 (GTSMDGVD)) interacts with ATP.

It belongs to the anhydro-N-acetylmuramic acid kinase family.

The enzyme catalyses 1,6-anhydro-N-acetyl-beta-muramate + ATP + H2O = N-acetyl-D-muramate 6-phosphate + ADP + H(+). It functions in the pathway amino-sugar metabolism; 1,6-anhydro-N-acetylmuramate degradation. It participates in cell wall biogenesis; peptidoglycan recycling. Catalyzes the specific phosphorylation of 1,6-anhydro-N-acetylmuramic acid (anhMurNAc) with the simultaneous cleavage of the 1,6-anhydro ring, generating MurNAc-6-P. Is required for the utilization of anhMurNAc either imported from the medium or derived from its own cell wall murein, and thus plays a role in cell wall recycling. In Pelagibacter ubique (strain HTCC1062), this protein is Anhydro-N-acetylmuramic acid kinase.